A 174-amino-acid chain; its full sequence is Small ribosomal subunit protein uS5 (174 aa).

An S5 DRBM domain is found at 19–82 (LREKMIAINR…EEARRNMTKI (64 aa)).

Belongs to the universal ribosomal protein uS5 family. In terms of assembly, part of the 30S ribosomal subunit. Contacts proteins S4 and S8.

In terms of biological role, with S4 and S12 plays an important role in translational accuracy. Located at the back of the 30S subunit body where it stabilizes the conformation of the head with respect to the body. The sequence is that of Small ribosomal subunit protein uS5 from Albidiferax ferrireducens (strain ATCC BAA-621 / DSM 15236 / T118) (Rhodoferax ferrireducens).